The sequence spans 426 residues: Dynein regulatory complex protein 10 (426 aa).

Disordered stretches follow at residues 18–37 (TRIGPKTDPSKRPADPLKPL) and 399–426 (SKKKRGKGKAKGKEKGKQKGKEKGKGKK). Residues 377–406 (MVRAATLIQAFWKGYLVRSLLRSKKKRGKG) enclose the IQ domain. Residues 399 to 408 (SKKKRGKGKA) are compositionally biased toward basic residues. The span at 409–426 (KGKEKGKQKGKEKGKGKK) shows a compositional bias: basic and acidic residues.

The protein belongs to the DRC10 family. As to quaternary structure, component of the nexin-dynein regulatory complex (N-DRC). Interacts with CFAP52.

The protein resides in the cytoplasm. It is found in the cytoskeleton. Its subcellular location is the flagellum axoneme. Its function is as follows. Component of the nexin-dynein regulatory complex (N-DRC), a key regulator of ciliary/flagellar motility which maintains the alignment and integrity of the distal axoneme and regulates microtubule sliding in motile axonemes. The chain is Dynein regulatory complex protein 10 (IQCD) from Macaca fascicularis (Crab-eating macaque).